The following is a 1462-amino-acid chain: Gag-Pol polyprotein (1462 aa).

Gly2 is lipidated: N-myristoyl glycine; by host. Residues 7–31 (VLRGKKADELEKVRLRPGGKKKYKL) are interaction with Gp41. Positions 16–22 (LEKVRLR) match the Nuclear export signal motif. The Nuclear localization signal motif lies at 26-32 (KKKYKLK). The tract at residues 111–136 (ETGTAEKMPDTSRPTAPPSGKGGNYP) is disordered. Tyr135 carries the post-translational modification Phosphotyrosine; by host. The segment at 191–228 (NCVGDHQAAMQIIREIINEEAADWDANHPIPGPLPAGQ) is interaction with human PPIA/CYPA and NUP153. Positions 279–365 (YNPTNILDIK…GGPGQKARLM (87 aa)) are dimerization/Multimerization of capsid protein p24. CCHC-type zinc fingers lie at residues 389-406 (IKCWNCGKEGHSARQCRA) and 410-427 (QGCWKCGKPGHIMTNCPD). Residues 439-510 (GKEAPQFPRG…GPMQGDNRGL (72 aa)) form a disordered region. Positions 456–469 (TNSTPIGSSSGSTG) are enriched in low complexity. Residues 473–491 (AAREKAEGAETETIQRGDR) show a composition bias toward basic and acidic residues. Residues 513-517 (PQFSL) are dimerization of protease. In terms of domain architecture, Peptidase A2 spans 532–601 (VEVLLDTGAD…TPINIFGRNI (70 aa)). Asp537 (for protease activity; shared with dimeric partner) is an active-site residue. Dimerization of protease regions lie at residues 561–567 (GIGGFIN) and 600–612 (NILTALGMSLNLP). One can recognise a Reverse transcriptase domain in the interval 655–845 (EGQLEEAPPT…PPYRWMGYEL (191 aa)). Mg(2+) is bound by residues Asp721, Asp796, and Asp797. The interval 838–846 (YRWMGYELW) is RT 'primer grip'. The Tryptophan repeat motif signature appears at 1007–1023 (WEQWWDNYWQVTWIPDW). The RNase H type-1 domain occupies 1043-1166 (IPGTETFYTD…VDHLVSQGIR (124 aa)). Residues Asp1052, Glu1087, Asp1107, and Asp1158 each coordinate Mg(2+). The segment at 1172–1213 (EKIEPAQEEHEKYHTNVKELCHKFDIPQLVARQIVNTCAQYQ) adopts an Integrase-type; degenerate zinc-finger fold. One can recognise an Integrase catalytic domain in the interval 1222-1373 (QVNAEVGTWQ…TPSERLINMI (152 aa)). The Mg(2+) site is built by Asp1233, Asp1285, and Glu1321. Residues 1392–1439 (FRVYFREGRDQLWKGPGELLWKGDGAVIVKVGTDIKIIPRRKAKIIRD) constitute a DNA-binding region (integrase-type).

Homotrimer; further assembles as hexamers of trimers. Interacts with gp41 (via C-terminus). Interacts with host CALM1; this interaction induces a conformational change in the Matrix protein, triggering exposure of the myristate group. Interacts with host AP3D1; this interaction allows the polyprotein trafficking to multivesicular bodies during virus assembly. Part of the pre-integration complex (PIC) which is composed of viral genome, matrix protein, Vpr and integrase. In terms of assembly, homodimer; the homodimer further multimerizes as homohexamers or homopentamers. Interacts with human PPIA/CYPA. Interacts with human NUP153. Interacts with host PDZD8; this interaction stabilizes the capsid. Interacts with monkey TRIM5; this interaction destabilizes the capsid. As to quaternary structure, homodimer, whose active site consists of two apposed aspartic acid residues. Heterodimer of p66 RT and p51 RT (RT p66/p51). Heterodimerization of RT is essential for DNA polymerase activity. The overall folding of the subdomains is similar in p66 RT and p51 RT but the spatial arrangements of the subdomains are dramatically different. In terms of assembly, homotetramer; may further associate as a homohexadecamer. Part of the pre-integration complex (PIC) which is composed of viral genome, matrix protein, Vpr and integrase. Interacts with human SMARCB1/INI1 and human PSIP1/LEDGF isoform 1. Interacts with human KPNA3; this interaction might play a role in nuclear import of the pre-integration complex. Interacts with human NUP153; this interaction might play a role in nuclear import of the pre-integration complex. The cofactor is Mg(2+). Post-translationally, specific enzymatic cleavages by the viral protease yield mature proteins. The protease is released by autocatalytic cleavage. The polyprotein is cleaved during and after budding, this process is termed maturation. Proteolytic cleavage of p66 RT removes the RNase H domain to yield the p51 RT subunit. Nucleocapsid protein p7 might be further cleaved after virus entry.

The protein resides in the host cell membrane. It is found in the host endosome. It localises to the host multivesicular body. The protein localises to the virion membrane. Its subcellular location is the host nucleus. The protein resides in the host cytoplasm. It is found in the virion. The enzyme catalyses Endopeptidase for which the P1 residue is preferably hydrophobic.. It catalyses the reaction Endohydrolysis of RNA in RNA/DNA hybrids. Three different cleavage modes: 1. sequence-specific internal cleavage of RNA. Human immunodeficiency virus type 1 and Moloney murine leukemia virus enzymes prefer to cleave the RNA strand one nucleotide away from the RNA-DNA junction. 2. RNA 5'-end directed cleavage 13-19 nucleotides from the RNA end. 3. DNA 3'-end directed cleavage 15-20 nucleotides away from the primer terminus.. The catalysed reaction is 3'-end directed exonucleolytic cleavage of viral RNA-DNA hybrid.. It carries out the reaction DNA(n) + a 2'-deoxyribonucleoside 5'-triphosphate = DNA(n+1) + diphosphate. Its activity is regulated as follows. Protease: The viral protease is inhibited by many synthetic protease inhibitors (PIs), such as amprenavir, atazanavir, indinavir, loprinavir, nelfinavir, ritonavir and saquinavir. Use of protease inhibitors in tritherapy regimens permit more ambitious therapeutic strategies. Reverse transcriptase/ribonuclease H: RT can be inhibited either by nucleoside RT inhibitors (NRTIs) or by non nucleoside RT inhibitors (NNRTIs). NRTIs act as chain terminators, whereas NNRTIs inhibit DNA polymerization by binding a small hydrophobic pocket near the RT active site and inducing an allosteric change in this region. Classical NRTIs are abacavir, adefovir (PMEA), didanosine (ddI), lamivudine (3TC), stavudine (d4T), tenofovir (PMPA), zalcitabine (ddC), and zidovudine (AZT). Classical NNRTIs are atevirdine (BHAP U-87201E), delavirdine, efavirenz (DMP-266), emivirine (I-EBU), and nevirapine (BI-RG-587). The tritherapies used as a basic effective treatment of AIDS associate two NRTIs and one NNRTI. In terms of biological role, mediates, with Gag polyprotein, the essential events in virion assembly, including binding the plasma membrane, making the protein-protein interactions necessary to create spherical particles, recruiting the viral Env proteins, and packaging the genomic RNA via direct interactions with the RNA packaging sequence (Psi). Gag-Pol polyprotein may regulate its own translation, by the binding genomic RNA in the 5'-UTR. At low concentration, the polyprotein would promote translation, whereas at high concentration, the polyprotein would encapsidate genomic RNA and then shut off translation. Targets the polyprotein to the plasma membrane via a multipartite membrane-binding signal, that includes its myristoylated N-terminus. Matrix protein is part of the pre-integration complex. Implicated in the release from host cell mediated by Vpu. Binds to RNA. Functionally, forms the conical core that encapsulates the genomic RNA-nucleocapsid complex in the virion. Most core are conical, with only 7% tubular. The core is constituted by capsid protein hexamer subunits. The core is disassembled soon after virion entry. Host restriction factors such as TRIM5-alpha or TRIMCyp bind retroviral capsids and cause premature capsid disassembly, leading to blocks in reverse transcription. Capsid restriction by TRIM5 is one of the factors which restricts HIV-1 to the human species. Host PIN1 apparently facilitates the virion uncoating. On the other hand, interactions with PDZD8 or CYPA stabilize the capsid. Its function is as follows. Encapsulates and protects viral dimeric unspliced genomic RNA (gRNA). Binds these RNAs through its zinc fingers. Acts as a nucleic acid chaperone which is involved in rearangement of nucleic acid secondary structure during gRNA retrotranscription. Also facilitates template switch leading to recombination. As part of the polyprotein, participates in gRNA dimerization, packaging, tRNA incorporation and virion assembly. In terms of biological role, aspartyl protease that mediates proteolytic cleavages of Gag and Gag-Pol polyproteins during or shortly after the release of the virion from the plasma membrane. Cleavages take place as an ordered, step-wise cascade to yield mature proteins. This process is called maturation. Displays maximal activity during the budding process just prior to particle release from the cell. Also cleaves Nef and Vif, probably concomitantly with viral structural proteins on maturation of virus particles. Hydrolyzes host EIF4GI and PABP1 in order to shut off the capped cellular mRNA translation. The resulting inhibition of cellular protein synthesis serves to ensure maximal viral gene expression and to evade host immune response. Multifunctional enzyme that converts the viral RNA genome into dsDNA in the cytoplasm, shortly after virus entry into the cell. This enzyme displays a DNA polymerase activity that can copy either DNA or RNA templates, and a ribonuclease H (RNase H) activity that cleaves the RNA strand of RNA-DNA heteroduplexes in a partially processive 3' to 5' endonucleasic mode. Conversion of viral genomic RNA into dsDNA requires many steps. A tRNA(3)-Lys binds to the primer-binding site (PBS) situated at the 5'-end of the viral RNA. RT uses the 3' end of the tRNA primer to perform a short round of RNA-dependent minus-strand DNA synthesis. The reading proceeds through the U5 region and ends after the repeated (R) region which is present at both ends of viral RNA. The portion of the RNA-DNA heteroduplex is digested by the RNase H, resulting in a ssDNA product attached to the tRNA primer. This ssDNA/tRNA hybridizes with the identical R region situated at the 3' end of viral RNA. This template exchange, known as minus-strand DNA strong stop transfer, can be either intra- or intermolecular. RT uses the 3' end of this newly synthesized short ssDNA to perform the RNA-dependent minus-strand DNA synthesis of the whole template. RNase H digests the RNA template except for two polypurine tracts (PPTs) situated at the 5'-end and near the center of the genome. It is not clear if both polymerase and RNase H activities are simultaneous. RNase H probably can proceed both in a polymerase-dependent (RNA cut into small fragments by the same RT performing DNA synthesis) and a polymerase-independent mode (cleavage of remaining RNA fragments by free RTs). Secondly, RT performs DNA-directed plus-strand DNA synthesis using the PPTs that have not been removed by RNase H as primers. PPTs and tRNA primers are then removed by RNase H. The 3' and 5' ssDNA PBS regions hybridize to form a circular dsDNA intermediate. Strand displacement synthesis by RT to the PBS and PPT ends produces a blunt ended, linear dsDNA copy of the viral genome that includes long terminal repeats (LTRs) at both ends. Functionally, catalyzes viral DNA integration into the host chromosome, by performing a series of DNA cutting and joining reactions. This enzyme activity takes place after virion entry into a cell and reverse transcription of the RNA genome in dsDNA. The first step in the integration process is 3' processing. This step requires a complex comprising the viral genome, matrix protein, Vpr and integrase. This complex is called the pre-integration complex (PIC). The integrase protein removes 2 nucleotides from each 3' end of the viral DNA, leaving recessed CA OH's at the 3' ends. In the second step, the PIC enters cell nucleus. This process is mediated through integrase and Vpr proteins, and allows the virus to infect a non dividing cell. This ability to enter the nucleus is specific of lentiviruses, other retroviruses cannot and rely on cell division to access cell chromosomes. In the third step, termed strand transfer, the integrase protein joins the previously processed 3' ends to the 5' ends of strands of target cellular DNA at the site of integration. The 5'-ends are produced by integrase-catalyzed staggered cuts, 5 bp apart. A Y-shaped, gapped, recombination intermediate results, with the 5'-ends of the viral DNA strands and the 3' ends of target DNA strands remaining unjoined, flanking a gap of 5 bp. The last step is viral DNA integration into host chromosome. This involves host DNA repair synthesis in which the 5 bp gaps between the unjoined strands are filled in and then ligated. Since this process occurs at both cuts flanking the HIV genome, a 5 bp duplication of host DNA is produced at the ends of HIV-1 integration. Alternatively, Integrase may catalyze the excision of viral DNA just after strand transfer, this is termed disintegration. The chain is Gag-Pol polyprotein (gag-pol) from Homo sapiens (Human).